The chain runs to 128 residues: Ribonuclease P protein component (128 aa).

Belongs to the RnpA family. In terms of assembly, consists of a catalytic RNA component (M1 or rnpB) and a protein subunit.

It catalyses the reaction Endonucleolytic cleavage of RNA, removing 5'-extranucleotides from tRNA precursor.. RNaseP catalyzes the removal of the 5'-leader sequence from pre-tRNA to produce the mature 5'-terminus. It can also cleave other RNA substrates such as 4.5S RNA. The protein component plays an auxiliary but essential role in vivo by binding to the 5'-leader sequence and broadening the substrate specificity of the ribozyme. In Prochlorococcus marinus (strain MIT 9301), this protein is Ribonuclease P protein component.